A 388-amino-acid polypeptide reads, in one-letter code: Flavin oxidoreductase hxnT (388 aa).

Belongs to the NADH:flavin oxidoreductase/NADH oxidase family. The cofactor is FMN.

Its function is as follows. Flavin oxidoreductase, part of the hnx cluster involved in the purine degradation. The nicotinate hydroxylase hnxS accepts nicotinate as a substrate and catalyzes the first step of nicotinate catabolism. The major facilitator-type transporters hxnP and hxnZ are probably involved in the uptake of nicotinate-derived metabolites, and the oxidoreductases hxnT and hxnY in the further metabolism of 6-OH nicotinic acid. In Emericella nidulans (strain FGSC A4 / ATCC 38163 / CBS 112.46 / NRRL 194 / M139) (Aspergillus nidulans), this protein is Flavin oxidoreductase hxnT.